The chain runs to 658 residues: Interferon-induced GTP-binding protein Mx1 (658 aa).

Position 1 is an N-acetylmethionine (Met-1). The interval 1 to 20 is disordered; sequence MVNSKGKITDSDPGSSHLLL. The Dynamin-type G domain maps to 65-338; sequence DLALPAIAVI…LITHICKTLP (274 aa). Positions 75–82 are G1 motif; that stretch reads GDQSSGKS. 75–82 is a binding site for GTP; that stretch reads GDQSSGKS. Residues 100–102 are G2 motif; the sequence is VTR. Residues 176–179 form a G3 motif region; it reads DLPG. GTP-binding positions include 176-180 and 245-248; these read DLPGI and TKPD. A G4 motif region spans residues 245 to 248; it reads TKPD. The interval 277-280 is G5 motif; that stretch reads KCRG. The tract at residues 339–364 is bundle signaling element (BSE); the sequence is LLENQIKENYEKITEELQKYGSDVPE. The middle domain stretch occupies residues 364–531; that stretch reads EEEHEKMFFL…HFQMEQIVYC (168 aa). The stalk stretch occupies residues 365 to 628; the sequence is EEHEKMFFLI…KDTHNWLLKE (264 aa). Positions 551–554 are critical for lipid-binding; the sequence is KDRK. The 89-residue stretch at 570–658 folds into the GED domain; that stretch reads LSDIFEHLLA…ARRRLAKFPG (89 aa).

Belongs to the TRAFAC class dynamin-like GTPase superfamily. Dynamin/Fzo/YdjA family. Homooligomer. Oligomerizes into multimeric filamentous or ring-like structures by virtue of its stalk domain. Oligomerization is critical for GTPase activity, protein stability, and recognition of viral target structures. Interacts with TRPC1, TRPC3, TRPC4, TRPC5, TRPC6 and TRPC7. Interacts with HSPA5. Interacts with TUBB/TUBB5. Interacts with DDX39A and DDX39B. In terms of processing, ISGylated.

It localises to the cytoplasm. Its subcellular location is the endoplasmic reticulum membrane. The protein localises to the perinuclear region. Interferon-induced dynamin-like GTPase with antiviral activity. This is Interferon-induced GTP-binding protein Mx1 (MX1) from Eumetopias jubatus (Steller sea lion).